The sequence spans 65 residues: uncharacterized protein (65 aa).

Helical transmembrane passes span 4 to 24 (AWLF…DKVL) and 39 to 59 (LPIP…FIVF).

The protein resides in the membrane. This is an uncharacterized protein from Streptococcus pneumoniae serotype 2 (strain D39 / NCTC 7466).